A 695-amino-acid chain; its full sequence is UvrABC system protein C (695 aa).

A compositionally biased stretch (basic and acidic residues) spans 1–10 (MNQDPAETRD). The interval 1-53 (MNQDPAETRDTAAPPPADTTSPSPVSPELEPRSAPGAQDIDAASASLTVDEDD) is disordered. A compositionally biased stretch (low complexity) spans 18–27 (DTTSPSPVSP). One can recognise a GIY-YIG domain in the interval 88–166 (TSPGVYRMLN…IKQLRPRFNV (79 aa)). The region spanning 276–311 (RAVKQELAVEMEKASNELEFETAALYRDRLAALSAI) is the UVR domain.

It belongs to the UvrC family. In terms of assembly, interacts with UvrB in an incision complex.

It localises to the cytoplasm. In terms of biological role, the UvrABC repair system catalyzes the recognition and processing of DNA lesions. UvrC both incises the 5' and 3' sides of the lesion. The N-terminal half is responsible for the 3' incision and the C-terminal half is responsible for the 5' incision. This chain is UvrABC system protein C, found in Rhodopseudomonas palustris (strain BisB5).